Reading from the N-terminus, the 1809-residue chain is Stereocilin (1809 aa).

A signal peptide spans 1–22; sequence MALSLQPQLLLLLSLLPQEVTS. N-linked (GlcNAc...) asparagine glycans are attached at residues asparagine 63, asparagine 200, asparagine 295, asparagine 352, and asparagine 364. Residues 376–426 form a disordered region; the sequence is PATPRPPPTTPRPPPTTPQPPPTTTQPIPDTTQPPPVTPRPPPTTPQPPPS. 2 stretches are compositionally biased toward pro residues: residues 378-399 and 407-426; these read TPRP…PPTT and TQPP…PPPS. N-linked (GlcNAc...) asparagine glycosylation is found at asparagine 467, asparagine 516, asparagine 580, asparagine 605, asparagine 696, asparagine 860, asparagine 952, asparagine 1000, asparagine 1213, and asparagine 1308.

It belongs to the stereocilin family. Strongly expressed in the inner ear, detected in the testis, and barely detected in the eye. Detected in the six sensory areas of the inner ear by immunofluorescence. Expressed only in the sensory hair cells and associated with the stereocilia, the stiff microvilli forming the structure for mechanoreception of sound stimulation.

Its subcellular location is the cell surface. It localises to the cell projection. The protein localises to the kinocilium. It is found in the stereocilium. Its function is as follows. Essential to the formation of horizontal top connectors between outer hair cell stereocilia. In Mus musculus (Mouse), this protein is Stereocilin (Strc).